Reading from the N-terminus, the 638-residue chain is Chaperone protein DnaK (638 aa).

At T200 the chain carries Phosphothreonine; by autocatalysis. Residues 598–621 (SLHMAATAEQQSGSTGAGAGASAK) form a disordered region.

This sequence belongs to the heat shock protein 70 family.

Acts as a chaperone. The protein is Chaperone protein DnaK of Xylella fastidiosa (strain M23).